The primary structure comprises 524 residues: Sucrose-binding protein (524 aa).

The first 29 residues, 1–29 (MGMRTKLSLAIFFFFLLALFSNLAFGKCK), serve as a signal peptide directing secretion. Residues 73–102 (QEREKQIQEETREKKEEESREREEEQQEQH) are compositionally biased toward basic and acidic residues. Residues 73–107 (QEREKQIQEETREKKEEESREREEEQQEQHEEQDE) are disordered. Cupin type-1 domains follow at residues 110 to 271 (YIFE…GKLE) and 312 to 478 (FNIF…EMVN). Positions 384–404 (CPHMSSRSSHSKHDKSSPSYH) are disordered.

In terms of tissue distribution, associated with the plasma membrane of several cell types engaged in sucrose transport, including the mesophyll cells of young sink leaves, the companion cells of mature phloem and the cells of developing cotyledons.

The protein localises to the membrane. In terms of biological role, plays a role in sucrose transport. This Glycine max (Soybean) protein is Sucrose-binding protein (SBP).